The primary structure comprises 152 residues: Interleukin-3 (152 aa).

Residues 1-19 (MSRLPVLLLLQLLVRPGLQ) form the signal peptide. Residues Asn-34 and Asn-89 are each glycosylated (N-linked (GlcNAc...) asparagine). An intrachain disulfide couples Cys-35 to Cys-103.

This sequence belongs to the IL-3 family. As to quaternary structure, monomer. As to expression, activated T-cells, mast cells, natural killer cells.

It localises to the secreted. Functionally, granulocyte/macrophage colony-stimulating factors are cytokines that act in hematopoiesis by controlling the production, differentiation, and function of 2 related white cell populations of the blood, the granulocytes and the monocytes-macrophages. Its function is as follows. This CSF induces granulocytes, macrophages, mast cells, stem cells, erythroid cells, eosinophils and megakaryocytes. The sequence is that of Interleukin-3 (IL3) from Pan troglodytes (Chimpanzee).